A 224-amino-acid chain; its full sequence is Phosphoribosylformylglycinamidine synthase subunit PurQ (224 aa).

The Glutamine amidotransferase type-1 domain maps to Phe3 to Ala224. Cys86 acts as the Nucleophile in catalysis. Residues His195 and Glu197 contribute to the active site.

As to quaternary structure, part of the FGAM synthase complex composed of 1 PurL, 1 PurQ and 2 PurS subunits.

The protein resides in the cytoplasm. The catalysed reaction is N(2)-formyl-N(1)-(5-phospho-beta-D-ribosyl)glycinamide + L-glutamine + ATP + H2O = 2-formamido-N(1)-(5-O-phospho-beta-D-ribosyl)acetamidine + L-glutamate + ADP + phosphate + H(+). It carries out the reaction L-glutamine + H2O = L-glutamate + NH4(+). It participates in purine metabolism; IMP biosynthesis via de novo pathway; 5-amino-1-(5-phospho-D-ribosyl)imidazole from N(2)-formyl-N(1)-(5-phospho-D-ribosyl)glycinamide: step 1/2. Functionally, part of the phosphoribosylformylglycinamidine synthase complex involved in the purines biosynthetic pathway. Catalyzes the ATP-dependent conversion of formylglycinamide ribonucleotide (FGAR) and glutamine to yield formylglycinamidine ribonucleotide (FGAM) and glutamate. The FGAM synthase complex is composed of three subunits. PurQ produces an ammonia molecule by converting glutamine to glutamate. PurL transfers the ammonia molecule to FGAR to form FGAM in an ATP-dependent manner. PurS interacts with PurQ and PurL and is thought to assist in the transfer of the ammonia molecule from PurQ to PurL. The polypeptide is Phosphoribosylformylglycinamidine synthase subunit PurQ (Trichormus variabilis (strain ATCC 29413 / PCC 7937) (Anabaena variabilis)).